The primary structure comprises 920 residues: Translation initiation factor IF-2 (920 aa).

Positions 33 to 305 are disordered; it reads KSASSTVEAP…RGRKSKRAKR (273 aa). The segment covering 53-86 has biased composition (low complexity); the sequence is SKSAPAPAKSAGNGATAAPATSATPATAAAAAAP. 3 stretches are compositionally biased toward pro residues: residues 87–159, 179–193, and 201–212; these read APAP…PAPR, PRPQ…PGTP, and NMPPRPAGPRPG. A compositionally biased stretch (gly residues) spans 225 to 291; that stretch reads PGGRGPGGGG…GAAGAFGRPG (67 aa). Basic residues predominate over residues 295-304; sequence KRGRKSKRAK. Residues 416-588 form the tr-type G domain; the sequence is IRPPVVTVMG…VLLTADASLD (173 aa). The tract at residues 425–432 is G1; the sequence is GHVDHGKT. 425–432 is a binding site for GTP; the sequence is GHVDHGKT. Residues 450 to 454 form a G2 region; the sequence is GITQH. Residues 475–478 are G3; the sequence is DTPG. Residues 475–479 and 529–532 contribute to the GTP site; these read DTPGH and NKID. Residues 529–532 are G4; sequence NKID. The tract at residues 565–567 is G5; that stretch reads SAK.

This sequence belongs to the TRAFAC class translation factor GTPase superfamily. Classic translation factor GTPase family. IF-2 subfamily.

It is found in the cytoplasm. Functionally, one of the essential components for the initiation of protein synthesis. Protects formylmethionyl-tRNA from spontaneous hydrolysis and promotes its binding to the 30S ribosomal subunits. Also involved in the hydrolysis of GTP during the formation of the 70S ribosomal complex. This chain is Translation initiation factor IF-2, found in Mycobacterium sp. (strain JLS).